Here is a 343-residue protein sequence, read N- to C-terminus: Mas-related G-protein coupled receptor member F (343 aa).

The Extracellular segment spans residues methionine 1–proline 44. N-linked (GlcNAc...) asparagine glycosylation is present at asparagine 4. A helical membrane pass occupies residues alanine 45–leucine 66. The Cytoplasmic segment spans residues tryptophan 67–phenylalanine 82. Residues leucine 83 to methionine 104 traverse the membrane as a helical segment. Topologically, residues glycine 105–glycine 123 are extracellular. Residues leucine 124 to serine 144 traverse the membrane as a helical segment. Residues valine 145–serine 160 are Cytoplasmic-facing. The chain crosses the membrane as a helical span at residues alanine 161 to phenylalanine 181. The Extracellular portion of the chain corresponds to cysteine 182 to aspartate 198. The chain crosses the membrane as a helical span at residues isoleucine 199–leucine 220. The Cytoplasmic segment spans residues isoleucine 221 to valine 241. Residues leucine 242–tryptophan 263 traverse the membrane as a helical segment. Topologically, residues valine 264–glutamate 273 are extracellular. The helical transmembrane segment at tyrosine 274 to alanine 294 threads the bilayer. Topologically, residues glycine 295–serine 343 are cytoplasmic. The segment at alanine 318 to serine 343 is disordered. The segment covering alanine 324 to serine 343 has biased composition (polar residues).

It belongs to the G-protein coupled receptor 1 family. Mas subfamily.

Its subcellular location is the cell membrane. Functionally, orphan receptor. May bind to a neuropeptide and may regulate nociceptor function and/or development, including the sensation or modulation of pain. In Mus musculus (Mouse), this protein is Mas-related G-protein coupled receptor member F (Mrgprf).